Here is a 295-residue protein sequence, read N- to C-terminus: Aspartate carbamoyltransferase catalytic subunit (295 aa).

The carbamoyl phosphate site is built by Arg54 and Thr55. Lys82 provides a ligand contact to L-aspartate. Carbamoyl phosphate is bound by residues Arg104, His132, and Gln135. L-aspartate contacts are provided by Arg165 and Arg218. Residues Gly257 and Pro258 each contribute to the carbamoyl phosphate site.

The protein belongs to the aspartate/ornithine carbamoyltransferase superfamily. ATCase family. Heterododecamer (2C3:3R2) of six catalytic PyrB chains organized as two trimers (C3), and six regulatory PyrI chains organized as three dimers (R2).

The enzyme catalyses carbamoyl phosphate + L-aspartate = N-carbamoyl-L-aspartate + phosphate + H(+). The protein operates within pyrimidine metabolism; UMP biosynthesis via de novo pathway; (S)-dihydroorotate from bicarbonate: step 2/3. Catalyzes the condensation of carbamoyl phosphate and aspartate to form carbamoyl aspartate and inorganic phosphate, the committed step in the de novo pyrimidine nucleotide biosynthesis pathway. The protein is Aspartate carbamoyltransferase catalytic subunit of Wolbachia pipientis subsp. Culex pipiens (strain wPip).